A 467-amino-acid chain; its full sequence is 3-isopropylmalate dehydratase large subunit (467 aa).

C347, C407, and C410 together coordinate [4Fe-4S] cluster.

It belongs to the aconitase/IPM isomerase family. LeuC type 1 subfamily. Heterodimer of LeuC and LeuD. It depends on [4Fe-4S] cluster as a cofactor.

The enzyme catalyses (2R,3S)-3-isopropylmalate = (2S)-2-isopropylmalate. The protein operates within amino-acid biosynthesis; L-leucine biosynthesis; L-leucine from 3-methyl-2-oxobutanoate: step 2/4. Its function is as follows. Catalyzes the isomerization between 2-isopropylmalate and 3-isopropylmalate, via the formation of 2-isopropylmaleate. This is 3-isopropylmalate dehydratase large subunit from Prochlorococcus marinus (strain MIT 9301).